Here is a 130-residue protein sequence, read N- to C-terminus: Phosphoribosyl-AMP cyclohydrolase (130 aa).

Residue D74 participates in Mg(2+) binding. C75 is a Zn(2+) binding site. 2 residues coordinate Mg(2+): D76 and D78. 2 residues coordinate Zn(2+): C91 and C98.

This sequence belongs to the PRA-CH family. Homodimer. Mg(2+) serves as cofactor. It depends on Zn(2+) as a cofactor.

Its subcellular location is the cytoplasm. The catalysed reaction is 1-(5-phospho-beta-D-ribosyl)-5'-AMP + H2O = 1-(5-phospho-beta-D-ribosyl)-5-[(5-phospho-beta-D-ribosylamino)methylideneamino]imidazole-4-carboxamide. It participates in amino-acid biosynthesis; L-histidine biosynthesis; L-histidine from 5-phospho-alpha-D-ribose 1-diphosphate: step 3/9. In terms of biological role, catalyzes the hydrolysis of the adenine ring of phosphoribosyl-AMP. The sequence is that of Phosphoribosyl-AMP cyclohydrolase from Bradyrhizobium sp. (strain ORS 278).